The following is a 194-amino-acid chain: Large ribosomal subunit protein eL15 (194 aa).

Residues 162–194 are disordered; sequence LTSAGRKSRGLRNKGKGAEKVRPSVRANKGKTK. Residues 167–176 show a composition bias toward basic residues; sequence RKSRGLRNKG.

The protein belongs to the eukaryotic ribosomal protein eL15 family.

The sequence is that of Large ribosomal subunit protein eL15 from Thermococcus onnurineus (strain NA1).